Reading from the N-terminus, the 118-residue chain is Holo-[acyl-carrier-protein] synthase (118 aa).

The Mg(2+) site is built by aspartate 6 and glutamate 55.

This sequence belongs to the P-Pant transferase superfamily. AcpS family. Requires Mg(2+) as cofactor.

The protein resides in the cytoplasm. The enzyme catalyses apo-[ACP] + CoA = holo-[ACP] + adenosine 3',5'-bisphosphate + H(+). In terms of biological role, transfers the 4'-phosphopantetheine moiety from coenzyme A to a Ser of acyl-carrier-protein. This is Holo-[acyl-carrier-protein] synthase from Chlorobium chlorochromatii (strain CaD3).